A 249-amino-acid chain; its full sequence is Phosphate import ATP-binding protein PstB 1 (249 aa).

An ABC transporter domain is found at 4–244; that stretch reads FNIENLDLFY…PKDDRTQGYV (241 aa). 36 to 43 lines the ATP pocket; sequence GPSGCGKS.

It belongs to the ABC transporter superfamily. Phosphate importer (TC 3.A.1.7) family. In terms of assembly, the complex is composed of two ATP-binding proteins (PstB), two transmembrane proteins (PstC and PstA) and a solute-binding protein (PstS).

The protein resides in the cell inner membrane. It carries out the reaction phosphate(out) + ATP + H2O = ADP + 2 phosphate(in) + H(+). Functionally, part of the ABC transporter complex PstSACB involved in phosphate import. Responsible for energy coupling to the transport system. The protein is Phosphate import ATP-binding protein PstB 1 of Aliivibrio fischeri (strain ATCC 700601 / ES114) (Vibrio fischeri).